A 71-amino-acid polypeptide reads, in one-letter code: UPF0435 protein SERP1418 (71 aa).

This sequence belongs to the UPF0435 family.

The polypeptide is UPF0435 protein SERP1418 (Staphylococcus epidermidis (strain ATCC 35984 / DSM 28319 / BCRC 17069 / CCUG 31568 / BM 3577 / RP62A)).